The chain runs to 104 residues: Met repressor (104 aa).

The protein belongs to the MetJ family. As to quaternary structure, homodimer.

It is found in the cytoplasm. Its function is as follows. This regulatory protein, when combined with SAM (S-adenosylmethionine) represses the expression of the methionine regulon and of enzymes involved in SAM synthesis. This is Met repressor from Shewanella oneidensis (strain ATCC 700550 / JCM 31522 / CIP 106686 / LMG 19005 / NCIMB 14063 / MR-1).